The primary structure comprises 230 residues: Large ribosomal subunit protein uL1 (230 aa).

Belongs to the universal ribosomal protein uL1 family. In terms of assembly, part of the 50S ribosomal subunit.

In terms of biological role, binds directly to 23S rRNA. The L1 stalk is quite mobile in the ribosome, and is involved in E site tRNA release. Functionally, protein L1 is also a translational repressor protein, it controls the translation of the L11 operon by binding to its mRNA. This is Large ribosomal subunit protein uL1 from Desulforapulum autotrophicum (strain ATCC 43914 / DSM 3382 / VKM B-1955 / HRM2) (Desulfobacterium autotrophicum).